Here is a 589-residue protein sequence, read N- to C-terminus: Mitogen-activated protein kinase 8 (589 aa).

The segment at 18-56 is disordered; sequence RPSSSSSSSSSNNNNNNHEQPIFNSSSFSSSSNPNHSAN. Low complexity-rich tracts occupy residues 20–34 and 41–56; these read SSSS…NNNN and NSSS…HSAN. In terms of domain architecture, Protein kinase spans 104 to 395; that stretch reads YQIQEVVGKG…AEDALADPYF (292 aa). ATP is bound by residues 110-118 and Lys-133; that span reads VGKGSYGVV. The active-site Proton acceptor is the Asp-230. Thr-266 carries the post-translational modification Phosphothreonine. Positions 266-268 match the TXY motif; the sequence is TDY. Tyr-268 carries the phosphotyrosine modification. Phosphothreonine is present on Thr-271. Residues 474–589 form a disordered region; it reads NQGKPGAAGG…TDKVASLHNS (116 aa).

It belongs to the protein kinase superfamily. CMGC Ser/Thr protein kinase family. MAP kinase subfamily. In terms of assembly, interacts with CAM3, CAM4 and CAM7 in an calcium-dependent manner. Dually phosphorylated on Thr-266 and Tyr-268, which activates the enzyme. Autophosphorylated. Ubiquitous.

The enzyme catalyses L-seryl-[protein] + ATP = O-phospho-L-seryl-[protein] + ADP + H(+). It catalyses the reaction L-threonyl-[protein] + ATP = O-phospho-L-threonyl-[protein] + ADP + H(+). With respect to regulation, activated by threonine and tyrosine phosphorylation. Activated by two independent mechanisms, the binding of CAMs in a calcium-dependent manner and the phosphorylation by MAP kinase kinase MKK3. Activated in response to mechanical wounding, hydrogen peroxide and jasmonic acid (JA). MKK3-MPK8 and CAMs-MPK8 modules negatively regulates ROS accumulation through controlling expression of the RBOHD gene during wounding. The protein is Mitogen-activated protein kinase 8 (MPK8) of Arabidopsis thaliana (Mouse-ear cress).